Here is a 158-residue protein sequence, read N- to C-terminus: Ribosomal RNA large subunit methyltransferase H (158 aa).

S-adenosyl-L-methionine contacts are provided by residues Leu-74, Gly-105, and 124–129 (LGPLTL).

It belongs to the RNA methyltransferase RlmH family. As to quaternary structure, homodimer.

The protein resides in the cytoplasm. The enzyme catalyses pseudouridine(1915) in 23S rRNA + S-adenosyl-L-methionine = N(3)-methylpseudouridine(1915) in 23S rRNA + S-adenosyl-L-homocysteine + H(+). In terms of biological role, specifically methylates the pseudouridine at position 1915 (m3Psi1915) in 23S rRNA. This chain is Ribosomal RNA large subunit methyltransferase H, found in Xylella fastidiosa (strain Temecula1 / ATCC 700964).